A 38-amino-acid polypeptide reads, in one-letter code: Large ribosomal subunit protein bL36 (38 aa).

The protein belongs to the bacterial ribosomal protein bL36 family.

The chain is Large ribosomal subunit protein bL36 from Ectopseudomonas mendocina (strain ymp) (Pseudomonas mendocina).